We begin with the raw amino-acid sequence, 161 residues long: Large ribosomal subunit protein uL23m (161 aa).

Residues 1-34 (MSKIAGKRLVYFPNITFTLCRGLNLQPKFAVFRV) constitute a mitochondrion transit peptide.

Belongs to the universal ribosomal protein uL23 family. As to quaternary structure, component of the mitochondrial large ribosomal subunit (mt-LSU). Mature yeast 74S mitochondrial ribosomes consist of a small (37S) and a large (54S) subunit. The 37S small subunit contains a 15S ribosomal RNA (15S mt-rRNA) and at least 32 different proteins. The 54S large subunit contains a 21S rRNA (21S mt-rRNA) and at least 45 different proteins. uL23m forms the wall of the exit tunnel. Interacts with the C-terminus of OXA1.

The protein localises to the mitochondrion. Component of the mitochondrial ribosome (mitoribosome), a dedicated translation machinery responsible for the synthesis of mitochondrial genome-encoded proteins, including at least some of the essential transmembrane subunits of the mitochondrial respiratory chain. The mitoribosomes are attached to the mitochondrial inner membrane and translation products are cotranslationally integrated into the membrane. This chain is Large ribosomal subunit protein uL23m (mrp20), found in Schizosaccharomyces pombe (strain 972 / ATCC 24843) (Fission yeast).